The chain runs to 621 residues: uncharacterized protein (621 aa).

2 disordered regions span residues 92–134 (FRNS…QINQ) and 268–310 (KINH…DDEI). Residues 94–134 (NSSNQSSQSNQVNQSNQSSPSSQISPSSQVNKFNQSSQINQ) show a composition bias toward low complexity. The span at 296–310 (TNDETNDETDNDDEI) shows a compositional bias: acidic residues. Residues 354 to 401 (ANKIQNKIIQIVETLNAYKNKQSQIAIEAKNKIKHITVSNKEVSENIE) adopt a coiled-coil conformation.

This is an uncharacterized protein from Acanthamoeba polyphaga mimivirus (APMV).